The primary structure comprises 537 residues: Membrane protein insertase YidC (537 aa).

5 helical membrane passes run 6–26 (SLLA…WEID), 341–363 (LVSN…LYPL), 411–431 (LGGC…YWTF), 449–469 (LSAQ…MFLL), and 490–510 (PVIF…YWLV).

This sequence belongs to the OXA1/ALB3/YidC family. Type 1 subfamily. In terms of assembly, interacts with the Sec translocase complex via SecD. Specifically interacts with transmembrane segments of nascent integral membrane proteins during membrane integration.

It localises to the cell inner membrane. In terms of biological role, required for the insertion and/or proper folding and/or complex formation of integral membrane proteins into the membrane. Involved in integration of membrane proteins that insert both dependently and independently of the Sec translocase complex, as well as at least some lipoproteins. Aids folding of multispanning membrane proteins. This Actinobacillus succinogenes (strain ATCC 55618 / DSM 22257 / CCUG 43843 / 130Z) protein is Membrane protein insertase YidC.